Reading from the N-terminus, the 658-residue chain is Gametogenetin (658 aa).

2 disordered regions span residues 1 to 268 (MGNV…ASGG) and 285 to 584 (KQGP…SNKG). Residues 14-30 (SRKEQASDRASDSRRTP) are compositionally biased toward basic and acidic residues. The segment covering 54–83 (PGSSGPPGLLIPPESQASSSTLPLTLELPS) has biased composition (low complexity). The tract at residues 127–491 (RGLLEASHRG…APTPPSTLSP (365 aa)) is interaction with GGNBP1. Pro residues predominate over residues 163 to 188 (PAPPPTPLEPRKQLPPAPSTCDPQPP). Over residues 194–204 (LASSATSPTES) the composition is skewed to polar residues. Low complexity predominate over residues 252–264 (SSSGPLAAKASLG). Ser384 carries the phosphoserine modification. Residues 398–409 (PRRPTPALLAPP) are compositionally biased toward low complexity. Over residues 423 to 460 (RPVPPSPQQIPPLPPPPPTPPATPPPAPPPTPQPPALP) the composition is skewed to pro residues. The span at 489–516 (LSPTAAAEQAPAPTPAPVTSQVPATTTA) shows a compositional bias: low complexity. Residues 496 to 658 (EQAPAPTPAP…HYDLQATHST (163 aa)) are interactions with ZNF403/GGNBP2 and OAZ3. Basic residues predominate over residues 527–536 (IRTRRNKGPR).

In terms of assembly, interacts with FANCL, GGNBP1 and ZNF403/GGNBP2.

Functionally, may be involved in spermatogenesis. The polypeptide is Gametogenetin (Ggn) (Rattus norvegicus (Rat)).